Consider the following 338-residue polypeptide: Glycerol-3-phosphate dehydrogenase [NAD(P)+] (338 aa).

NADPH is bound by residues Ser-14, Phe-15, Arg-35, and Lys-109. Residues Lys-109 and Gly-137 each contribute to the sn-glycerol 3-phosphate site. Ala-141 provides a ligand contact to NADPH. Sn-glycerol 3-phosphate-binding residues include Lys-192, Asp-247, Ser-257, Arg-258, and Asn-259. The active-site Proton acceptor is the Lys-192. NADPH is bound at residue Arg-258. Positions 282 and 284 each coordinate NADPH.

The protein belongs to the NAD-dependent glycerol-3-phosphate dehydrogenase family.

The protein localises to the cytoplasm. It carries out the reaction sn-glycerol 3-phosphate + NAD(+) = dihydroxyacetone phosphate + NADH + H(+). The catalysed reaction is sn-glycerol 3-phosphate + NADP(+) = dihydroxyacetone phosphate + NADPH + H(+). It participates in membrane lipid metabolism; glycerophospholipid metabolism. Its function is as follows. Catalyzes the reduction of the glycolytic intermediate dihydroxyacetone phosphate (DHAP) to sn-glycerol 3-phosphate (G3P), the key precursor for phospholipid synthesis. The protein is Glycerol-3-phosphate dehydrogenase [NAD(P)+] of Rickettsia rickettsii (strain Iowa).